A 4911-amino-acid chain; its full sequence is Histone-lysine N-methyltransferase 2C (4911 aa).

The interval 1 to 101 (MSSEEDKSVE…EDAEAEVDNS (101 aa)) is disordered. A compositionally biased stretch (pro residues) spans 12-28 (PQPPPPPPEEPGAPAPS). 2 positions are modified to phosphoserine: Ser-28 and Ser-46. Positions 34 to 46 (KRPRGRPRKDGAS) form a DNA-binding region, a.T hook. Positions 50 to 59 (RARKKPRSRG) are enriched in basic residues. A compositionally biased stretch (acidic residues) spans 64-81 (EDEDSMDGLETTETETIV). Ser-89 carries the post-translational modification Phosphoserine. Residues 92-112 (EDAEAEVDNSKQLIPTLQRSV) adopt a coiled-coil conformation. Ser-113 carries the phosphoserine modification. The segment at 164-203 (RNQPSNKKDIDDNSNGTYEKMQNSAPRKQRGQRKERSPQQ) is disordered. Over residues 176–189 (NSNGTYEKMQNSAP) the composition is skewed to polar residues. Residue Ser-200 is modified to Phosphoserine. Residues 227–262 (ELSLVGLPDAIDIQALFDSTGTCWAHHRCVEWSLGV) form a C2HC pre-PHD-type 1; degenerate zinc finger. 4 PHD-type zinc fingers span residues 283-331 (ERCA…PEHI), 341-391 (DANC…CKVC), 388-438 (CKVC…CRIC), and 464-520 (DNLC…CKHL). The segment at 344-389 (CAVCDSPGDLLDQFFCTTCGQHYHGMCLDIAVTPLKRAGWQCPECK) adopts an RING-type zinc-finger fold. The DHHC domain maps to 436–489 (RICIECGTRSSSQWHHNCLICDNCYQQQDNLCPFCGKCYHPELQKDMLHCNMCK). Residues 644–672 (EDKMEVTENIEVVTHQITVQQEQLQLLEE) are a coiled coil. Positions 721–730 (QGEKEQKENS) are enriched in basic and acidic residues. The interval 721–742 (QGEKEQKENSELSTGLMDSEMT) is disordered. An N6-acetyllysine modification is found at Lys-758. Over residues 763–791 (SSETESSFSSSADISKADVSSSPTPSSDL) the composition is skewed to low complexity. Disordered stretches follow at residues 763-798 (SSET…DMLH), 828-864 (PAIT…DISE), and 885-912 (GRGS…RSKL). Residues 830 to 842 (ITKRKFSPGRPRS) are compositionally biased toward basic residues. The segment covering 845–856 (GAWSTHNTVSPP) has biased composition (polar residues). Ser-854 carries the post-translational modification Phosphoserine. 3 PHD-type zinc fingers span residues 957–1010 (QDMC…CTVC), 1007–1057 (CTVC…CVWC), and 1084–1139 (LSSC…CRPY). The disordered stretch occupies residues 1215–1324 (AVLQTPPDIQ…LPCRDDGWSE (110 aa)). Residues 1224–1270 (QSEHSRDGEMDDSREGELMDCDGKSESSPEREAVDDETKGVEGTDGV) show a composition bias toward basic and acidic residues. Ser-1301 carries the phosphoserine modification. Residues 1338–1366 (TESTEKIKKRYRKRKNKLEETFPAYLQEA) are a coiled coil. Residues 1406–1416 (PSLDPLLSSSS) show a composition bias toward low complexity. 2 disordered regions span residues 1406 to 1431 (PSLD…DDPL) and 1458 to 1485 (HSDI…PLSE). Polar residues predominate over residues 1467–1482 (DPSSLPQPNVNQSSRP). The residue at position 1508 (Lys-1508) is an N6-acetyllysine. Disordered regions lie at residues 1604-1630 (FNPM…DTMS) and 1709-2448 (VQMS…SPVA). Composition is skewed to polar residues over residues 1610-1620 (DPNNSWTSSAP) and 1709-1727 (VQMS…SIDP). The segment covering 1729 to 1753 (SRIDSELFKDPLKQRESEHEQEWKF) has biased composition (basic and acidic residues). The stretch at 1754-1787 (RQQMRQKSKQQAKIEATQKLEQVKNEQQQQQQQQ) forms a coiled coil. Lys-1772 is subject to N6-acetyllysine. Polar residues predominate over residues 1788–1823 (FGSQHLLVQSGSDTPSSGIQSPLTPQPGNGNMSPAQ). Residues 1851 to 1860 (QAPPPPPAPS) show a composition bias toward pro residues. A compositionally biased stretch (low complexity) spans 1861–1875 (RIPIQDSLSQAQTSQ). Over residues 1927–1945 (TPLSSVSRPLQMNETTANR) the composition is skewed to polar residues. The residue at position 1987 (Ser-1987) is a Phosphoserine. N6-acetyllysine is present on Lys-2009. Polar residues-rich tracts occupy residues 2054–2065 (QDPYGSVSQASR), 2085–2094 (FSHNQSNDPY), 2115–2131 (AFSQ…QDPY), and 2144–2159 (SYSQ…TDPY). A compositionally biased stretch (low complexity) spans 2173-2187 (PYSQQPQTPRPSTQT). Composition is skewed to polar residues over residues 2302–2319 (SPMT…SQTA), 2335–2353 (CASS…SGVS), and 2362–2375 (SGVT…NMAQ). Residues 2377 to 2389 (DTEKLRQRQKLRE) show a composition bias toward basic and acidic residues. The span at 2390 to 2399 (IILQQQQQKK) shows a compositional bias: low complexity. Asymmetric dimethylarginine is present on residues Arg-2454 and Arg-2571. 4 disordered regions span residues 2589–2694 (RHGN…SDDP), 2793–2887 (EPKK…RETA), 2925–2954 (EKSD…VSSL), and 2989–3029 (VNPG…SGPQ). 2 stretches are compositionally biased toward polar residues: residues 2629–2645 (PPSQ…SSMV) and 2661–2682 (PLST…TQPS). Residues 2793 to 2811 (EPKKKEQENKTLVLSDKHS) show a composition bias toward basic and acidic residues. Lys-2802 and Lys-2809 each carry N6-acetyllysine. Polar residues predominate over residues 2814 to 2832 (KKSTVTNEVKTEVLSPNSK). A Phosphoserine modification is found at Ser-2828. An N6-acetyllysine modification is found at Lys-2832. Residues 2833–2849 (VESKCETEKNDENKDNV) are compositionally biased toward basic and acidic residues. Residues 2851–2860 (TPCSQASAHS) are compositionally biased toward polar residues. Residues 2861 to 2884 (DLNDGEKTSLHPCDPDLFEKRTNR) show a composition bias toward basic and acidic residues. Position 2867 is an N6-acetyllysine (Lys-2867). Positions 3011-3029 (TQTGPQTSQSGTSSMSGPQ) are enriched in low complexity. Coiled coils occupy residues 3054 to 3081 (LLQD…QRSE), 3173 to 3272 (NDSQ…QQQQ), and 3391 to 3433 (FSES…EMEQ). A compositionally biased stretch (basic residues) spans 3205 to 3221 (HRKSKKALSAKQRTAKK). Disordered regions lie at residues 3205 to 3241 (HRKS…TEQQ), 3353 to 3409 (PPIA…EQQE), 3527 to 3583 (PNFS…HSYP), 3596 to 3919 (IIPE…MANG), and 4024 to 4053 (VKEE…SRRN). Composition is skewed to basic and acidic residues over residues 3222–3238 (AGRE…KHVT) and 3395–3409 (FQER…EQQE). 4 stretches are compositionally biased toward polar residues: residues 3527–3549 (PNFS…QSPV), 3564–3583 (ANSS…HSYP), 3637–3658 (ISET…QADQ), and 3684–3701 (LPNS…TYAN). Residues 3703-3725 (EVDKLSMETPAKTEEIKLEKAET) show a composition bias toward basic and acidic residues. Lys-3714 bears the N6-acetyllysine mark. Ser-3758 is modified (phosphoserine). Over residues 3803–3812 (DCTKDNKLVE) the composition is skewed to basic and acidic residues. Over residues 3878–3892 (MYSSTDTFTHLKQQN) the composition is skewed to polar residues. Positions 3897-3911 (PPTPPASLPPTPPPM) are enriched in pro residues. Ser-4034 is modified (phosphoserine). At Arg-4139 the chain carries Asymmetric dimethylarginine. Ser-4267 is modified (phosphoserine). The C2HC pre-PHD-type 2 zinc finger occupies 4399–4439 (YRKCCFCHEEGDGLTDGPARLLNLDLDLWVHLNCALWSTEV). The segment at 4460 to 4507 (MKCVFCHKTGATSGCHRFRCTNIYHFTCAIKAQCMFFKDKTMLCPMHK) adopts a PHD-type 8 zinc-finger fold. The region spanning 4545-4605 (DHTFRVGSLI…CRYLCSIEEK (61 aa)) is the FYR N-terminal domain. Residues 4606 to 4691 (DGRPVFVIRI…EACENYTFRY (86 aa)) form the FYR C-terminal domain. The WDR5 interaction motif (WIN) signature appears at 4707-4712 (GCARSE). Residues 4771-4887 (SNVYLARSRI…KGEELCYDYK (117 aa)) form the SET domain. S-adenosyl-L-methionine contacts are provided by residues Tyr-4825 and 4848–4849 (NH). Cys-4851, Cys-4899, Cys-4901, and Cys-4906 together coordinate Zn(2+). Residues 4895–4911 (HKIPCHCGAVNCRKWMN) enclose the Post-SET domain.

The protein belongs to the class V-like SAM-binding methyltransferase superfamily. Histone-lysine methyltransferase family. TRX/MLL subfamily. Component of the MLL3 complex (also named ASCOM complex), at least composed of catalytic subunit KMT2C/MLL3, ASH2L, RBBP5, WDR5, NCOA6, DPY30, KDM6A, PAXIP1/PTIP, PAGR1 and alpha- and beta-tubulin. Forms a core complex with the evolutionary conserved subcomplex WRAD composed of WDR5, RBBP5, ASH2L/ASH2 and DPY30 subunits; WRAD differentially stimulates the methyltransferase activity. Interacts (via WIN motif) with WDR5. Highly expressed in testis and ovary, followed by brain and liver. Also expressed in placenta, peripherical blood, fetal thymus, heart, lung and kidney. Within brain, expression was highest in hippocampus, caudate nucleus, and substantia nigra. Not detected in skeletal muscle and fetal liver.

The protein localises to the nucleus. The catalysed reaction is L-lysyl(4)-[histone H3] + S-adenosyl-L-methionine = N(6)-methyl-L-lysyl(4)-[histone H3] + S-adenosyl-L-homocysteine + H(+). In terms of biological role, histone methyltransferase that catalyzes methyl group transfer from S-adenosyl-L-methionine to the epsilon-amino group of 'Lys-4' of histone H3 (H3K4). Part of chromatin remodeling machinery predominantly forms H3K4me1 methylation marks at active chromatin sites where transcription and DNA repair take place. Likely plays a redundant role with KMT2D in enriching H3K4me1 mark on primed and active enhancer elements. The chain is Histone-lysine N-methyltransferase 2C (KMT2C) from Homo sapiens (Human).